A 198-amino-acid chain; its full sequence is Imidazoleglycerol-phosphate dehydratase (198 aa).

This sequence belongs to the imidazoleglycerol-phosphate dehydratase family.

The protein resides in the cytoplasm. It carries out the reaction D-erythro-1-(imidazol-4-yl)glycerol 3-phosphate = 3-(imidazol-4-yl)-2-oxopropyl phosphate + H2O. It functions in the pathway amino-acid biosynthesis; L-histidine biosynthesis; L-histidine from 5-phospho-alpha-D-ribose 1-diphosphate: step 6/9. The protein is Imidazoleglycerol-phosphate dehydratase of Herminiimonas arsenicoxydans.